The following is a 46-amino-acid chain: KTCEHLADTYRGVCFTNASCDDHCKNKAHLISGTCHNWKCFCTQNC.

Cystine bridges form between cysteine 3–cysteine 46, cysteine 14–cysteine 35, cysteine 20–cysteine 40, and cysteine 24–cysteine 42.

It belongs to the DEFL family. In terms of tissue distribution, epidermis and vascular bundles of pods, stems, roots, leaves and wet or dry seeds.

In terms of biological role, possesses antifungal activity sensitive to inorganic cations. This is Defensin-1 from Pisum sativum (Garden pea).